Consider the following 642-residue polypeptide: Threonine--tRNA ligase (642 aa).

A TGS domain is found at 1–61 (MPIITLPDGS…EADASLAIIT (61 aa)). The catalytic stretch occupies residues 243 to 534 (DHRKIGKQLD…LTEEYAGLFP (292 aa)). Positions 334, 385, and 511 each coordinate Zn(2+).

Belongs to the class-II aminoacyl-tRNA synthetase family. In terms of assembly, homodimer. The cofactor is Zn(2+).

The protein resides in the cytoplasm. It catalyses the reaction tRNA(Thr) + L-threonine + ATP = L-threonyl-tRNA(Thr) + AMP + diphosphate + H(+). Catalyzes the attachment of threonine to tRNA(Thr) in a two-step reaction: L-threonine is first activated by ATP to form Thr-AMP and then transferred to the acceptor end of tRNA(Thr). Also edits incorrectly charged L-seryl-tRNA(Thr). This Aeromonas hydrophila subsp. hydrophila (strain ATCC 7966 / DSM 30187 / BCRC 13018 / CCUG 14551 / JCM 1027 / KCTC 2358 / NCIMB 9240 / NCTC 8049) protein is Threonine--tRNA ligase.